A 558-amino-acid polypeptide reads, in one-letter code: Potassium-transporting ATPase potassium-binding subunit (558 aa).

A run of 11 helical transmembrane segments spans residues 1–21, 58–78, 85–105, 130–150, 179–199, 245–265, 279–299, 374–394, 416–436, 484–504, and 527–547; these read MDTLAGILQVASVVLVLVLVH, WPAYLRAVLAFSLVGVLVVYG, FLPYALGLPAVPEGISFNTAV, GLAVQNFVSAAVGIAVAIALV, LSLVTAVVLIAGGVIQNFAGF, PTAWTSAFQVLLMLVIPFSLP, TAIAAVMATIAVASLTALTLF, GLYGMLVLAVIAVFVAGLLVG, ILVTPILVLVGTALSFAIPAV, ALGVAMLLGRFVPIVLVLALA, and FVGLLIGVTVIVTALTYFPVL.

This sequence belongs to the KdpA family. In terms of assembly, the system is composed of three essential subunits: KdpA, KdpB and KdpC.

Its subcellular location is the cell membrane. Functionally, part of the high-affinity ATP-driven potassium transport (or Kdp) system, which catalyzes the hydrolysis of ATP coupled with the electrogenic transport of potassium into the cytoplasm. This subunit binds the extracellular potassium ions and delivers the ions to the membrane domain of KdpB through an intramembrane tunnel. This is Potassium-transporting ATPase potassium-binding subunit from Clavibacter sepedonicus (Clavibacter michiganensis subsp. sepedonicus).